A 204-amino-acid polypeptide reads, in one-letter code: Putative 3-methyladenine DNA glycosylase (204 aa).

Belongs to the DNA glycosylase MPG family.

This Bacillus mycoides (strain KBAB4) (Bacillus weihenstephanensis) protein is Putative 3-methyladenine DNA glycosylase.